The primary structure comprises 129 residues: uncharacterized protein (129 aa).

This is an uncharacterized protein from Invertebrate iridescent virus 6 (IIV-6).